Consider the following 501-residue polypeptide: MKKRGVLCEEEKEVKKRKLLEQIGDGHLPYLSSKDDTFYDLWGSCYSKLTLLQAKHVPVDLHHTVQNAFLSLLRNGCLFQDLVRLKGKDIITPVSRILIGRPGYTYKYLNTRLFAVPWINDELNTQYSTRNLLETYKAFSDLNDFLYSQTVNELQKLGKIHKDNFFQHSEYKEQIKSDQRPSTSNYENVKLHSMESFNVTLINYMDPQNMSFLKEEPYFGMGKMAVSWHHDENLVEQSTVAVYNYSYQESSNDVNGEDEDPTRWHVGLKIAWDIETPGLLMPLSSGDCYLMLDDLNKTHQHCVIAGCQPRFSSTHRVAESSTGTLQYIKSQCNSALQNLHMNPDTGAADLKNLEPNVLGQTEEIHNEVEFEWLRQFWFQGKRYNKCTTFWKEAMTELEIHWKQMETMTSLVLKAIENENLTVDEKCNILKNILPPLVERQDLRHDWRERCRSKLAKMLPPDQVPCFYPYWNDDNKTMPLPFDLHNIISALQKTLEENELKL.

The tract at residues 32-321 (SSKDDTFYDL…SSTHRVAESS (290 aa)) is fe2OG dioxygenase domain. 2 residues coordinate substrate: Arg96 and Tyr108. Asn203 provides a ligand contact to 2-oxoglutarate. Positions 211-222 (SFLKEEPYFGMG) are loop L1; predicted to block binding of double-stranded DNA or RNA. Fe cation contacts are provided by His229 and Asp231. 229-232 (HHDE) contacts substrate. Residue Tyr289 participates in 2-oxoglutarate binding. His301 serves as a coordination point for Fe cation. Residues 310-312 (RFS), Thr314, and Arg316 contribute to the 2-oxoglutarate site.

This sequence belongs to the fto family. In terms of assembly, monomer. May also exist as homodimer. Fe(2+) is required as a cofactor.

It localises to the nucleus. The protein resides in the nucleus speckle. The protein localises to the cytoplasm. It catalyses the reaction a 5'-end (N(7)-methyl 5'-triphosphoguanosine)-(N(6),2'-O-dimethyladenosine) in mRNA + 2-oxoglutarate + O2 = a 5'-end (N(7)-methyl 5'-triphosphoguanosine)-(2'-O-methyladenosine) in mRNA + formaldehyde + succinate + CO2. The enzyme catalyses an N(6)-methyladenosine in mRNA + 2-oxoglutarate + O2 = an adenosine in mRNA + formaldehyde + succinate + CO2. The catalysed reaction is N(6)-methyladenosine in U6 snRNA + 2-oxoglutarate + O2 = adenosine in U6 snRNA + formaldehyde + succinate + CO2. It carries out the reaction a 5'-end (N(7)-methyl 5'-triphosphoguanosine)-(N(6),2'-O-dimethyladenosine) in U6 snRNA + 2-oxoglutarate + O2 = a 5'-end (N(7)-methyl 5'-triphosphoguanosine)-(2'-O-methyladenosine) in U6 snRNA + formaldehyde + succinate + CO2. It catalyses the reaction an N(1)-methyladenosine in tRNA + 2-oxoglutarate + O2 = an adenosine in tRNA + formaldehyde + succinate + CO2. Its activity is regulated as follows. Activated by ascorbate. Inhibited by N-oxalylglycine, fumarate and succinate. Its function is as follows. RNA demethylase that mediates oxidative demethylation of different RNA species, such as mRNAs, tRNAs and snRNAs, and acts as a regulator of fat mass, adipogenesis and energy homeostasis. Specifically demethylates N(6)-methyladenosine (m6A) RNA, the most prevalent internal modification of messenger RNA (mRNA) in higher eukaryotes. M6A demethylation by FTO affects mRNA expression and stability. Also able to demethylate m6A in U6 small nuclear RNA (snRNA). Mediates demethylation of N(6),2'-O-dimethyladenosine cap (m6A(m)), by demethylating the N(6)-methyladenosine at the second transcribed position of mRNAs and U6 snRNA. Demethylation of m6A(m) in the 5'-cap by FTO affects mRNA stability by promoting susceptibility to decapping. Also acts as a tRNA demethylase by removing N(1)-methyladenine from various tRNAs. The protein is Alpha-ketoglutarate-dependent dioxygenase FTO (fto) of Xenopus laevis (African clawed frog).